Here is a 285-residue protein sequence, read N- to C-terminus: Undecaprenyl-diphosphatase (285 aa).

Helical transmembrane passes span 40–60 (DELL…LLYF), 92–112 (LCIL…ENFI), 122–142 (SVYA…WADA), 159–179 (FLIG…RSGI), 197–217 (FSML…LLGL), 233–253 (LIVA…LMAL), and 259–279 (FLPF…TSPI).

Belongs to the UppP family.

It is found in the cell inner membrane. It catalyses the reaction di-trans,octa-cis-undecaprenyl diphosphate + H2O = di-trans,octa-cis-undecaprenyl phosphate + phosphate + H(+). Functionally, catalyzes the dephosphorylation of undecaprenyl diphosphate (UPP). Confers resistance to bacitracin. This is Undecaprenyl-diphosphatase from Hyphomonas neptunium (strain ATCC 15444).